A 230-amino-acid chain; its full sequence is Heptaprenylglyceryl phosphate synthase (230 aa).

A sn-glycerol 1-phosphate-binding site is contributed by Lys-12. Asp-14 and Thr-40 together coordinate Mg(2+). Sn-glycerol 1-phosphate-binding positions include 159-164, Gly-189, and 209-210; these read YIEYSG and GD.

This sequence belongs to the GGGP/HepGP synthase family. Group I subfamily. Homodimer. Mg(2+) is required as a cofactor.

It carries out the reaction sn-glycerol 1-phosphate + all-trans-heptaprenyl diphosphate = 3-heptaprenyl-sn-glycero-1-phosphate + diphosphate. The protein operates within membrane lipid metabolism; glycerophospholipid metabolism. Functionally, prenyltransferase that catalyzes in vivo the transfer of the heptaprenyl moiety of heptaprenyl pyrophosphate (HepPP; 35 carbon atoms) to the C3 hydroxyl of sn-glycerol-1-phosphate (G1P), producing heptaprenylglyceryl phosphate (HepGP). This reaction is an ether-bond-formation step in the biosynthesis of archaea-type G1P-based membrane lipids found in Bacillales. This is Heptaprenylglyceryl phosphate synthase from Staphylococcus aureus (strain Mu3 / ATCC 700698).